Here is a 478-residue protein sequence, read N- to C-terminus: Aspartyl/glutamyl-tRNA(Asn/Gln) amidotransferase subunit B (478 aa).

The protein belongs to the GatB/GatE family. GatB subfamily. In terms of assembly, heterotrimer of A, B and C subunits.

The enzyme catalyses L-glutamyl-tRNA(Gln) + L-glutamine + ATP + H2O = L-glutaminyl-tRNA(Gln) + L-glutamate + ADP + phosphate + H(+). The catalysed reaction is L-aspartyl-tRNA(Asn) + L-glutamine + ATP + H2O = L-asparaginyl-tRNA(Asn) + L-glutamate + ADP + phosphate + 2 H(+). Functionally, allows the formation of correctly charged Asn-tRNA(Asn) or Gln-tRNA(Gln) through the transamidation of misacylated Asp-tRNA(Asn) or Glu-tRNA(Gln) in organisms which lack either or both of asparaginyl-tRNA or glutaminyl-tRNA synthetases. The reaction takes place in the presence of glutamine and ATP through an activated phospho-Asp-tRNA(Asn) or phospho-Glu-tRNA(Gln). This chain is Aspartyl/glutamyl-tRNA(Asn/Gln) amidotransferase subunit B, found in Dichelobacter nodosus (strain VCS1703A).